The primary structure comprises 312 residues: Malate dehydrogenase (312 aa).

NAD(+) is bound by residues 12–17 (GAGFTG) and Asp-36. Substrate-binding residues include Arg-87 and Arg-93. NAD(+) is bound by residues Asn-100 and 123–125 (LTN). Asn-125 lines the substrate pocket. Ser-149 carries the phosphoserine modification. Arg-156 provides a ligand contact to substrate. His-180 serves as the catalytic Proton acceptor.

This sequence belongs to the LDH/MDH superfamily. MDH type 3 family. As to quaternary structure, homotetramer.

It carries out the reaction (S)-malate + NAD(+) = oxaloacetate + NADH + H(+). Functionally, catalyzes the reversible oxidation of malate to oxaloacetate. In Bacillus israeli, this protein is Malate dehydrogenase.